The chain runs to 229 residues: Triosephosphate isomerase (229 aa).

9-11 (NYK) lines the substrate pocket. The Electrophile role is filled by H93. Catalysis depends on E141, which acts as the Proton acceptor. Residues I146, G180, and 201–202 (AS) contribute to the substrate site.

The protein belongs to the triosephosphate isomerase family. As to quaternary structure, homotetramer; dimer of dimers.

It localises to the cytoplasm. It carries out the reaction D-glyceraldehyde 3-phosphate = dihydroxyacetone phosphate. Its pathway is carbohydrate biosynthesis; gluconeogenesis. The protein operates within carbohydrate degradation; glycolysis; D-glyceraldehyde 3-phosphate from glycerone phosphate: step 1/1. In terms of biological role, involved in the gluconeogenesis. Catalyzes stereospecifically the conversion of dihydroxyacetone phosphate (DHAP) to D-glyceraldehyde-3-phosphate (G3P). The polypeptide is Triosephosphate isomerase (Sulfurisphaera tokodaii (strain DSM 16993 / JCM 10545 / NBRC 100140 / 7) (Sulfolobus tokodaii)).